We begin with the raw amino-acid sequence, 793 residues long: MKVSKLWLREWVNFSLTEQELAEQLTMAGLEVDAVNPVAGQFTHVIVAEVLNTKPHPDADKLTLCEVNINKDKPLKIVCGAANVRPGLRVALAMIGAHLPGGLQIKESKLRGELSQGMLCSATELGLAEHSEGIMELSDEAPIGMDLREYLALDDHVFDIDLTPNRADCFSILGVAREVAVLNKLPLIEQPIVTVAPAIDDGLRVNLIHSEACPRYCGRIIRNLNLEAKTPLWMAERLRRGGIRTLHPVVDVMNYVMLELGQPMHAFDLAKINGEINVRYSASGEQLELLDGQEVVLNDNVLVIADKEKPLAMAGIMGGANSAVQELTQHVFLESAYFNPVTIAGVARKYGLFSDSSQRFERGVDPCLQSKALERATELILSISGGEPGPVIESFDKKFLPGTVSFLFDTTKVKKLTGLSIPLNEMKNLLEGLGVVITKETNHFFEVTIPSHRVDLQQDADLVEEIIRLYGYDKLQAQPMQTSVQAGLISAKEKIATHVSSWFSAKGYHETISYSFVDPELQEALYPQKEFMELLNPISSELSQMRAGMWPGLIASMIYNSHRQQTAVKFFEIGVVFDLDGGQLKERSCIAGLLMGEQGNLNWSESARLFDFYDLKGDLQSLFASLKLNDVEFIQSSHHALHPGQSAQIVINGKHSGWIGVLHPRLSDAFDLDQDVVLFELNLESLINPTIPLYKPISKYPQIRRDLSFLVDRQISAMQIERVIRNTVKEDWLKSFDVFDVYMGKGIPEDKKSIAVAMTLQDDTRTLVDAEINLTISAIIKKLENEFSILLRE.

Residues 39-148 enclose the tRNA-binding domain; the sequence is AGQFTHVIVA…DEAPIGMDLR (110 aa). A B5 domain is found at 401–477; sequence PGTVSFLFDT…RLYGYDKLQA (77 aa). Mg(2+) is bound by residues D455, D461, E464, and E465. Residues 698–792 form the FDX-ACB domain; that stretch reads SKYPQIRRDL…LENEFSILLR (95 aa).

The protein belongs to the phenylalanyl-tRNA synthetase beta subunit family. Type 1 subfamily. In terms of assembly, tetramer of two alpha and two beta subunits. The cofactor is Mg(2+).

The protein localises to the cytoplasm. The catalysed reaction is tRNA(Phe) + L-phenylalanine + ATP = L-phenylalanyl-tRNA(Phe) + AMP + diphosphate + H(+). The protein is Phenylalanine--tRNA ligase beta subunit of Legionella pneumophila (strain Paris).